Reading from the N-terminus, the 182-residue chain is ATP synthase subunit b, chloroplastic (182 aa).

The helical transmembrane segment at isoleucine 36–valine 56 threads the bilayer.

The protein belongs to the ATPase B chain family. In terms of assembly, F-type ATPases have 2 components, F(1) - the catalytic core - and F(0) - the membrane proton channel. F(1) has five subunits: alpha(3), beta(3), gamma(1), delta(1), epsilon(1). F(0) has four main subunits: a(1), b(1), b'(1) and c(10-14). The alpha and beta chains form an alternating ring which encloses part of the gamma chain. F(1) is attached to F(0) by a central stalk formed by the gamma and epsilon chains, while a peripheral stalk is formed by the delta, b and b' chains.

Its subcellular location is the plastid. It localises to the chloroplast thylakoid membrane. F(1)F(0) ATP synthase produces ATP from ADP in the presence of a proton or sodium gradient. F-type ATPases consist of two structural domains, F(1) containing the extramembraneous catalytic core and F(0) containing the membrane proton channel, linked together by a central stalk and a peripheral stalk. During catalysis, ATP synthesis in the catalytic domain of F(1) is coupled via a rotary mechanism of the central stalk subunits to proton translocation. Functionally, component of the F(0) channel, it forms part of the peripheral stalk, linking F(1) to F(0). This is ATP synthase subunit b, chloroplastic from Gracilaria tenuistipitata var. liui (Red alga).